The following is a 249-amino-acid chain: Testis-expressed protein 101 (249 aa).

Residues 1-25 (MGTPRIQHLLILLVLGASLLTSGLE) form the signal peptide. Residues Asn45 and Asn159 are each glycosylated (N-linked (GlcNAc...) asparagine). One can recognise a UPAR/Ly6 domain in the interval 140-211 (CPTCVALGTC…PMFVREACPH (72 aa)). Asn222 carries the GPI-anchor amidated asparagine lipid modification. The propeptide at 223-249 (GATCLPIPVWGLQLLLPLLLPSFIHFS) is removed in mature form.

In terms of assembly, interacts with VAMP3. Interacts with LY6K. Interacts with DPEP3; co-localized on the cell surface of spermatocytes, spermatids, and testicular spermatozoa, co-localized only in cytoplasmic droplets of caput and corpus epididymal sperm. Interacts with ADAM5. Post-translationally, N-glycosylated; by high mannose and/or biantennary complex and/or certain types of hybrid oligosaccharides; possesses different oligosaccharides chains according to its subcellular localization in the testis. Sheds from membrane raft by ACE and released from the cell surface of epididymal sperm while it passes through the caput epididymis leading to disappearance of TEX101 on spermatozoa; is essential to produce fertile spermatozoa. In terms of tissue distribution, detected in testis and spermatogonia. Not detected in spermatocytes. Detected in blood leukocytes.

The protein localises to the cell membrane. It localises to the membrane raft. It is found in the cytoplasmic vesicle. Its subcellular location is the secretory vesicle. The protein resides in the acrosome. The protein localises to the secreted. Functionally, plays a role in fertilization by controlling binding of sperm to zona pellucida and migration of spermatozoa into the oviduct. May play a role in signal transduction and promote protein tyrosine phosphorylation. In Homo sapiens (Human), this protein is Testis-expressed protein 101.